Here is a 145-residue protein sequence, read N- to C-terminus: I-leader protein (145 aa).

The protein belongs to the adenoviridae leader protein family.

The protein localises to the host cytoplasm. It is found in the host perinuclear region. This is I-leader protein from Human adenovirus C serotype 5 (HAdV-5).